A 782-amino-acid chain; its full sequence is U-box domain-containing protein 7 (782 aa).

In terms of domain architecture, U-box spans 271 to 345; that stretch reads VPPEELRCPI…ASWCEQNGTQ (75 aa). ARM repeat units lie at residues 456–499, 502–541, 542–581, 583–623, and 626–665; these read EEAR…NLAV, NRNKELMLTSGVIRLLEKMISSAESHGSATALYLNLSCLD, EAKSVIGSSQAVPFLVQLLQKEIETQCKLDALHALYNLST, SPNI…NLAS, and EGKDEAVSSQGMISSLATVLDMGDTTEQEQAVSCLLILCN. The span at 707–729 shows a compositional bias: basic and acidic residues; it reads EERQQRDQPSSNRDEPPQKEPAR. Residues 707 to 765 are disordered; that stretch reads EERQQRDQPSSNRDEPPQKEPARKSLSAPLSVHGSTPASASVQDYEPRVLSKSMSRRKS. A compositionally biased stretch (polar residues) spans 739–748; sequence HGSTPASASV.

It catalyses the reaction S-ubiquitinyl-[E2 ubiquitin-conjugating enzyme]-L-cysteine + [acceptor protein]-L-lysine = [E2 ubiquitin-conjugating enzyme]-L-cysteine + N(6)-ubiquitinyl-[acceptor protein]-L-lysine.. It functions in the pathway protein modification; protein ubiquitination. Its function is as follows. Functions as an E3 ubiquitin ligase. The protein is U-box domain-containing protein 7 (PUB7) of Arabidopsis thaliana (Mouse-ear cress).